A 170-amino-acid polypeptide reads, in one-letter code: Protein AIG2 A (170 aa).

Substrate is bound at residue 15-20 (YGSFQE). The Proton acceptor role is filled by E83. A compositionally biased stretch (basic and acidic residues) spans 147–162 (KNPNGRSREEFEKFVQ). Positions 147–170 (KNPNGRSREEFEKFVQDDSSPASA) are disordered.

The protein belongs to the gamma-glutamylcyclotransferase family. In terms of tissue distribution, ubiquitous.

Functionally, putative gamma-glutamylcyclotransferase. This chain is Protein AIG2 A, found in Arabidopsis thaliana (Mouse-ear cress).